Reading from the N-terminus, the 409-residue chain is Argininosuccinate synthase (409 aa).

ATP is bound by residues 12-20 and alanine 39; that span reads AYSGGLDTS. 2 residues coordinate L-citrulline: tyrosine 90 and serine 95. Glycine 120 lines the ATP pocket. Residues threonine 122, asparagine 126, and aspartate 127 each coordinate L-aspartate. Asparagine 126 contacts L-citrulline. L-citrulline-binding residues include arginine 130, serine 181, serine 190, glutamate 266, and tyrosine 278.

The protein belongs to the argininosuccinate synthase family. Type 1 subfamily. In terms of assembly, homotetramer.

It is found in the cytoplasm. The catalysed reaction is L-citrulline + L-aspartate + ATP = 2-(N(omega)-L-arginino)succinate + AMP + diphosphate + H(+). The protein operates within amino-acid biosynthesis; L-arginine biosynthesis; L-arginine from L-ornithine and carbamoyl phosphate: step 2/3. This chain is Argininosuccinate synthase, found in Gluconacetobacter diazotrophicus (strain ATCC 49037 / DSM 5601 / CCUG 37298 / CIP 103539 / LMG 7603 / PAl5).